A 157-amino-acid chain; its full sequence is Phosphopantetheine adenylyltransferase (157 aa).

Ser8 provides a ligand contact to substrate. Residues 8–9 (SF) and His16 each bind ATP. Residues Lys40, Thr72, and Arg86 each contribute to the substrate site. ATP is bound by residues 87-89 (GLR), Glu97, and 122-128 (FSFLSSS).

It belongs to the bacterial CoaD family. Homohexamer. It depends on Mg(2+) as a cofactor.

The protein resides in the cytoplasm. It carries out the reaction (R)-4'-phosphopantetheine + ATP + H(+) = 3'-dephospho-CoA + diphosphate. Its pathway is cofactor biosynthesis; coenzyme A biosynthesis; CoA from (R)-pantothenate: step 4/5. Functionally, reversibly transfers an adenylyl group from ATP to 4'-phosphopantetheine, yielding dephospho-CoA (dPCoA) and pyrophosphate. The protein is Phosphopantetheine adenylyltransferase of Prochlorococcus marinus (strain MIT 9211).